Reading from the N-terminus, the 484-residue chain is Protein arginine methyltransferase NDUFAF7 homolog, mitochondrial (484 aa).

The N-terminal 12 residues, M1–N12, are a transit peptide targeting the mitochondrion.

It belongs to the NDUFAF7 family. In terms of assembly, homodimer. Interacts with ndufs2.

The protein localises to the mitochondrion. The catalysed reaction is L-arginyl-[protein] + 2 S-adenosyl-L-methionine = N(omega),N(omega)'-dimethyl-L-arginyl-[protein] + 2 S-adenosyl-L-homocysteine + 2 H(+). Its function is as follows. Involved in the assembly or stability of mitochondrial NADH:ubiquinone oxidoreductase complex (complex I). Acts as an arginine methyltransferase and probably acts by mediating arginine methylation of ndufs2. This Dictyostelium discoideum (Social amoeba) protein is Protein arginine methyltransferase NDUFAF7 homolog, mitochondrial.